A 555-amino-acid chain; its full sequence is Glypican-6 (555 aa).

Positions 1-23 are cleaved as a signal peptide; it reads MPSWIRAVILPLSGLLLTLPAAA. Positions 348-357 are enriched in low complexity; it reads PALRSARSAP. Disordered regions lie at residues 348 to 376 and 480 to 501; these read PALR…PTTA and GNDV…GSGC. The GPI-anchor amidated serine moiety is linked to residue Ser530. Residues 531–555 constitute a propeptide, removed in mature form; it reads ASKFSSSLISWSLVCMVLALQRLYR.

This sequence belongs to the glypican family. In the cartilage growth-plate, gradient of expression with highest levels from the proliferative and pre-hypertrophic zones to lowest, if any, in the hypertrophic zones (at protein level).

Its subcellular location is the cell membrane. The protein resides in the secreted. The protein localises to the extracellular space. Functionally, cell surface proteoglycan that bears heparan sulfate. Putative cell surface coreceptor for growth factors, extracellular matrix proteins, proteases and anti-proteases. Enhances migration and invasion of cancer cells through WNT5A signaling. The sequence is that of Glypican-6 (Gpc6) from Mus musculus (Mouse).